The sequence spans 377 residues: UPF0754 membrane protein LMOf2365_2257 (377 aa).

Helical transmembrane passes span 1 to 21 and 357 to 377; these read MSVL…GAMT and YLGG…AMWI.

The protein belongs to the UPF0754 family.

Its subcellular location is the cell membrane. The protein is UPF0754 membrane protein LMOf2365_2257 of Listeria monocytogenes serotype 4b (strain F2365).